The chain runs to 582 residues: NAB transcription cofactor mab-10 (582 aa).

Residues 1 to 70 (MSSSSSSSLP…SSSSQRQSTS (70 aa)) are compositionally biased toward low complexity. 4 disordered regions span residues 1–84 (MSSS…MPTP), 257–287 (SDQQSSSTSSVRSVLPSTSSNTSHPELPAGI), 333–365 (PPSSTSIQQPSTSFGRSSSITGQEKEGSSSPFL), and 516–582 (SRKR…LPES). The segment at 83–161 (TPTTLSEWQL…EYSQDQTAFN (79 aa)) is NCD1. 2 stretches are compositionally biased toward low complexity: residues 257–276 (SDQQSSSTSSVRSVLPSTSS) and 333–345 (PPSSTSIQQPSTS). Positions 396–519 (LSTAQISRLA…GYNYAKSRKR (124 aa)) are NCD2. Positions 573–582 (EKMKGELPES) are enriched in basic and acidic residues.

It belongs to the NAB family. As to quaternary structure, interacts with transcription factor lin-29 (via C-terminus).

It is found in the nucleus. Transcriptional cofactor. Heterochronic protein, involved in timing of a subset of differentiation events during the larval-to-adult transition. Promotes hypodermal terminal differentiation, together with transcription factor lin-29, perhaps as part of a transcriptional complex. Involved in regulating molting by repressing the expression of nuclear hormone receptors nhr-23 and nhr-25 in the adult hypoderm, probably acting in concert with lin-29. This chain is NAB transcription cofactor mab-10, found in Caenorhabditis elegans.